The following is a 439-amino-acid chain: Proline--tRNA ligase (439 aa).

It belongs to the class-II aminoacyl-tRNA synthetase family. ProS type 2 subfamily. As to quaternary structure, homodimer.

The protein resides in the cytoplasm. It catalyses the reaction tRNA(Pro) + L-proline + ATP = L-prolyl-tRNA(Pro) + AMP + diphosphate. Catalyzes the attachment of proline to tRNA(Pro) in a two-step reaction: proline is first activated by ATP to form Pro-AMP and then transferred to the acceptor end of tRNA(Pro). In Phenylobacterium zucineum (strain HLK1), this protein is Proline--tRNA ligase.